Consider the following 351-residue polypeptide: Cobalt-precorrin-5B C(1)-methyltransferase (351 aa).

Belongs to the CbiD family.

It carries out the reaction Co-precorrin-5B + S-adenosyl-L-methionine = Co-precorrin-6A + S-adenosyl-L-homocysteine. It participates in cofactor biosynthesis; adenosylcobalamin biosynthesis; cob(II)yrinate a,c-diamide from sirohydrochlorin (anaerobic route): step 6/10. In terms of biological role, catalyzes the methylation of C-1 in cobalt-precorrin-5B to form cobalt-precorrin-6A. This chain is Cobalt-precorrin-5B C(1)-methyltransferase, found in Thermosipho africanus (strain TCF52B).